The chain runs to 341 residues: Phenylalanine--tRNA ligase alpha subunit (341 aa).

Glu-256 contacts Mg(2+).

It belongs to the class-II aminoacyl-tRNA synthetase family. Phe-tRNA synthetase alpha subunit type 1 subfamily. Tetramer of two alpha and two beta subunits. Requires Mg(2+) as cofactor.

It is found in the cytoplasm. The enzyme catalyses tRNA(Phe) + L-phenylalanine + ATP = L-phenylalanyl-tRNA(Phe) + AMP + diphosphate + H(+). The chain is Phenylalanine--tRNA ligase alpha subunit from Chlamydia felis (strain Fe/C-56) (Chlamydophila felis).